We begin with the raw amino-acid sequence, 257 residues long: MSDRKNVLFVVGKSSAVKELEEFASCNADRANVKIEIVENIGLATDGPLYSAILSGFGADDNVSCDLNLLPTYTTLLTAGGTLIAKTDVGTEDALVKRMKLCGFLNVAKSESVPGVVVGNMPTYKVGSSDKVTLNPEMKENVVSAWKLDDNNSETISEDDLLEADDLIKPDSSSLRVCATTKKAKACKDCSCGLAEELEANRLKDTPKPDTSNAKSSCGSCYLGDAFRCASCPYLGMPAFRPGEKVQLAGNLLQDDF.

The interval 1–134 (MSDRKNVLFV…KVGSSDKVTL (134 aa)) is N-terminal SAM-like domain. The interval 135–168 (NPEMKENVVSAWKLDDNNSETISEDDLLEADDLI) is linker. [2Fe-2S] cluster is bound by residues Cys178, Cys187, Cys190, and Cys192. The interval 178 to 192 (CATTKKAKACKDCSC) is fe-S binding site A. Cys218, Cys221, Cys229, and Cys232 together coordinate [4Fe-4S] cluster. 2 short sequence motifs (cx2C motif) span residues 218–221 (CGSC) and 229–232 (CASC). The segment at 218–232 (CGSCYLGDAFRCASC) is fe-S binding site B.

This sequence belongs to the anamorsin family. In terms of assembly, monomer. [2Fe-2S] cluster serves as cofactor. Requires [4Fe-4S] cluster as cofactor.

The protein localises to the cytoplasm. It localises to the mitochondrion intermembrane space. Functionally, component of the cytosolic iron-sulfur (Fe-S) protein assembly (CIA) machinery. Required for the maturation of extramitochondrial Fe-S proteins. Part of an electron transfer chain functioning in an early step of cytosolic Fe-S biogenesis, facilitating the de novo assembly of a [4Fe-4S] cluster on the cytosolic Fe-S scaffold complex. Electrons are transferred from NADPH via a FAD- and FMN-containing diflavin oxidoreductase. Together with the diflavin oxidoreductase, also required for the assembly of the diferric tyrosyl radical cofactor of ribonucleotide reductase (RNR), probably by providing electrons for reduction during radical cofactor maturation in the catalytic small subunit. The protein is Anamorsin homolog of Acyrthosiphon pisum (Pea aphid).